The chain runs to 534 residues: CAP-Gly domain-containing linker protein 3 (534 aa).

Over residues 1 to 16 (MTREDLPDSTPEESKL) the composition is skewed to basic and acidic residues. A disordered region spans residues 1–33 (MTREDLPDSTPEESKLPMEFQSPLLEKRRRPVV). ANK repeat units follow at residues 107-148 (TDMT…LRSR), 150-173 (TNMNALHYAAYFDVPELLRTLLKA), and 187-299 (NHGT…KAGT). A CAP-Gly 1 domain is found at 304–346 (GTTEFASGQWVGVELDEPDGKNDGSVGGIRYFICPPKQGIFAP). The interval 349-391 (KISKAPDQPPSSVTSTPRTPRVDFSRVTGKGRKEKKATHKKSL) is disordered. Residues 358 to 367 (PSSVTSTPRT) are compositionally biased toward low complexity. A compositionally biased stretch (basic residues) spans 377-390 (GKGRKEKKATHKKS). In terms of domain architecture, CAP-Gly 2 spans 423–465 (GKTDFAPGYWFGIELEKPTGKHDGSVFGVRYFTCSAKNGVFAP). Residues 475–534 (PKDPQTDNNDMKKVHQVTMTQPKRNFTKVRTPKEIASENSMSRILFCCWFPWLLRAEMKS) are goLD.

In terms of assembly, homodimer.

It is found in the cytoplasm. It localises to the golgi apparatus. Its subcellular location is the golgi stack. Functionally, functions as a cytoplasmic linker protein. Involved in TGN-endosome dynamics. The sequence is that of CAP-Gly domain-containing linker protein 3 (clip3) from Xenopus laevis (African clawed frog).